The chain runs to 522 residues: Tyrosine-protein phosphatase 1 (522 aa).

Residues 32 to 63 are disordered; that stretch reads RSNSSISLSSSSHSSFSRMGSLGSLPTNSGSS. The segment covering 33–63 has biased composition (low complexity); sequence SNSSISLSSSSHSSFSRMGSLGSLPTNSGSS. In terms of domain architecture, Tyrosine-protein phosphatase spans 97-471; the sequence is IKEEFRLLEE…LFCYKTILDE (375 aa). Cys310 serves as the catalytic Phosphocysteine intermediate. A PTPase insert (Asn-rich) region spans residues 327–426; it reads MKKLDHYFKQ…DDAAESDLKY (100 aa). Positions 382–410 are enriched in low complexity; the sequence is NNNNNNNLNNNNNINNNSNGSNNTPQTEP. Residues 382-420 are disordered; it reads NNNNNNNLNNNNNINNNSNGSNNTPQTEPNNEEDDDDAA. The span at 411-420 shows a compositional bias: acidic residues; the sequence is NNEEDDDDAA.

The protein belongs to the protein-tyrosine phosphatase family. Non-receptor class subfamily. As to expression, expressed predominantly in anterior-like cells and to a lesser degree in prestalk cells.

Its subcellular location is the cytoplasm. It is found in the cell membrane. It carries out the reaction O-phospho-L-tyrosyl-[protein] + H2O = L-tyrosyl-[protein] + phosphate. May have a role in growth and in the early stages of development. Affects the timing of development. The chain is Tyrosine-protein phosphatase 1 (ptpA1-1) from Dictyostelium discoideum (Social amoeba).